Here is a 559-residue protein sequence, read N- to C-terminus: ATP synthase subunit beta-3, mitochondrial (559 aa).

Over residues 1–28 (MASRRILSSLLRSSSSRSTSKSSLIGSR) the composition is skewed to low complexity. A disordered region spans residues 1-39 (MASRRILSSLLRSSSSRSTSKSSLIGSRNPRLLSPGPAH). Residues 1-54 (MASRRILSSLLRSSSSRSTSKSSLIGSRNPRLLSPGPAHGAAPCGTLLGRVAEY) constitute a mitochondrion transit peptide. Serine 62 carries the post-translational modification Phosphoserine. 234 to 241 (GGAGVGKT) lines the ATP pocket.

This sequence belongs to the ATPase alpha/beta chains family. As to quaternary structure, F-type ATPases have 2 components, CF(1) - the catalytic core - and CF(0) - the membrane proton channel. CF(1) has five subunits: alpha(3), beta(3), gamma(1), delta(1), epsilon(1). CF(0) has three main subunits: a, b and c.

Its subcellular location is the mitochondrion. The protein localises to the mitochondrion inner membrane. It carries out the reaction ATP + H2O + 4 H(+)(in) = ADP + phosphate + 5 H(+)(out). Its function is as follows. Mitochondrial membrane ATP synthase (F(1)F(0) ATP synthase or Complex V) produces ATP from ADP in the presence of a proton gradient across the membrane which is generated by electron transport complexes of the respiratory chain. F-type ATPases consist of two structural domains, F(1) - containing the extramembraneous catalytic core, and F(0) - containing the membrane proton channel, linked together by a central stalk and a peripheral stalk. During catalysis, ATP synthesis in the catalytic domain of F(1) is coupled via a rotary mechanism of the central stalk subunits to proton translocation. Subunits alpha and beta form the catalytic core in F(1). Rotation of the central stalk against the surrounding alpha(3)beta(3) subunits leads to hydrolysis of ATP in three separate catalytic sites on the beta subunits. This chain is ATP synthase subunit beta-3, mitochondrial, found in Arabidopsis thaliana (Mouse-ear cress).